The chain runs to 886 residues: Interference hedgehog (886 aa).

An N-terminal signal peptide occupies residues 1 to 20 (MTLLTSSLLLFSLLTSRLEA). Residues 21-709 (IPVLEKSPAH…ETFNMSPMLT (689 aa)) lie on the Extracellular side of the membrane. A compositionally biased stretch (low complexity) spans 29–38 (AHPAHSAHPA). The segment at 29-52 (AHPAHSAHPAHPAHPAHPAHPSPG) is disordered. Ig-like C2-type domains lie at 51–148 (PGVR…IARL), 138–238 (PLVV…ERIQ), 258–346 (PHLL…YIKV), and 352–438 (PQIV…LQVN). 4 cysteine pairs are disulfide-bonded: Cys74-Cys132, Cys179-Cys226, Cys282-Cys330, and Cys373-Cys420. Residues Asn108 and Asn215 are each glycosylated (N-linked (GlcNAc...) asparagine). The segment at 432-475 (GTLLQVNPKQIQEPRESGGTHRPKPNQGSRQKQMYPPTPPNVTR) is disordered. Fibronectin type-III domains lie at 467 to 573 (PPTP…LQPG) and 581 to 676 (VPEL…TQRP). N-linked (GlcNAc...) asparagine glycosylation is present at Asn472. The heparin site is built by Arg503, Lys507, Lys509, and Arg547. Asn563 carries an N-linked (GlcNAc...) asparagine glycan. The disordered stretch occupies residues 668 to 697 (LKQGRTQRPKTSTTEEPTLQMGDRDTTTPS). Over residues 671-684 (GRTQRPKTSTTEEP) the composition is skewed to polar residues. N-linked (GlcNAc...) asparagine glycosylation occurs at Asn699. A helical membrane pass occupies residues 710-730 (GTIGGGAVLILLLISTCFCVC). Residues 731–886 (RRRNSRSRGN…SSGSLNSVGV (156 aa)) are Cytoplasmic-facing. Disordered regions lie at residues 734-768 (NSRS…QRQR) and 781-886 (QQQQ…SVGV). Low complexity-rich tracts occupy residues 829 to 843 (RAGG…NNNN) and 870 to 886 (SSRS…SVGV).

It belongs to the immunoglobulin superfamily. IHOG family. As to quaternary structure, homodimer. Heterotetramer; 2 iHog chains bind 2 hh chains when facilitated by heparin, heparin is required to promote high-affinity interactions between hh and iHog.

The protein localises to the membrane. In terms of biological role, mediates response to the active Hedgehog (Hh) protein signal in embryos, functioning upstream or at the level of patched (ptc). In Drosophila melanogaster (Fruit fly), this protein is Interference hedgehog (ihog).